We begin with the raw amino-acid sequence, 485 residues long: Protein LAZ1 (485 aa).

Over 1-19 (MDILKSYHLLAAAYSAPAW) the chain is Cytoplasmic. Residues 20 to 40 (ASFMAGAFLVLTLSLSLFLVF) traverse the membrane as a helical segment. Residues 41–53 (DHLSTYKNPEEQK) are Lumenal-facing. A helical membrane pass occupies residues 54–74 (FLIGVILMVPCYSIESFASLV). Residues 75 to 167 (KPSISVDCGI…QVVKFGIVQY (93 aa)) are Cytoplasmic-facing. Residues 168–188 (MIIKSLTALTALILEAFGVYC) form a helical membrane-spanning segment. Residues 189–196 (EGEFKWGC) are Lumenal-facing. Residues 197–217 (GYPYLAVVLNFSQSWALYCLV) form a helical membrane-spanning segment. Residues 218 to 241 (QFYGATKDELAHIQPLAKFLTFKS) lie on the Cytoplasmic side of the membrane. Residues 242–262 (IVFLTWWQGVAIALLSSLGLF) traverse the membrane as a helical segment. Over 263–277 (KSSIAQSLQLKTSVQ) the chain is Lumenal. A helical transmembrane segment spans residues 278 to 298 (DFIICIEMGIASVVHLYVFPA). The Cytoplasmic segment spans residues 299 to 485 (KPYGLMGDRF…VRGRRWITKD (187 aa)). Positions 384 to 415 (MEKSITKFNEKLHKISQNIKKHDKEKRRVKDD) form a coiled coil. The tract at residues 400 to 485 (QNIKKHDKEK…VRGRRWITKD (86 aa)) is disordered. The segment covering 403–416 (KKHDKEKRRVKDDS) has biased composition (basic and acidic residues). Residues 455–469 (GYTSAESGGESSSDQ) show a composition bias toward polar residues. Residues 476–485 (VRGRRWITKD) show a composition bias toward basic and acidic residues.

The protein belongs to the TMEM184 family.

The protein localises to the endomembrane system. The protein resides in the cell membrane. It localises to the cytoplasm. Its subcellular location is the cytosol. In terms of biological role, required for programmed cell death (PCD) associated with hypersensitive response (HR). Involved both in the induction of EDS1/PAD4 mediated HR and in accelerated cell death in the acd11 mutant. Not required for HR induction elicited through pathways exclusively dependent on CC-NB-LRR resistance proteins. This is Protein LAZ1 from Arabidopsis thaliana (Mouse-ear cress).